Here is a 507-residue protein sequence, read N- to C-terminus: Xylose import ATP-binding protein XylG (507 aa).

ABC transporter domains are found at residues 5-242 (LKMT…VGRE) and 259-504 (LEVK…LSEK). 37–44 (GENGSGKS) lines the ATP pocket.

It belongs to the ABC transporter superfamily. Xylose importer (TC 3.A.1.2.4) family. The complex is composed of two ATP-binding proteins (XylG), two transmembrane proteins (XylH) and a solute-binding protein (XylF).

Its subcellular location is the cell inner membrane. It carries out the reaction D-xylose(out) + ATP + H2O = D-xylose(in) + ADP + phosphate + H(+). Its function is as follows. Part of the ABC transporter complex XylFGH involved in xylose import. Responsible for energy coupling to the transport system. The protein is Xylose import ATP-binding protein XylG of Photobacterium profundum (strain SS9).